A 259-amino-acid chain; its full sequence is Merozoite surface protein CMZ-8 (259 aa).

Residues 1-108 show a composition bias toward pro residues; that stretch reads PLPFSPPSTP…STPVSPPSSP (108 aa). Disordered regions lie at residues 1-127 and 174-203; these read PLPF…STSE and RPGSSAADRRHCTRSTRSSRRMSRRHRHKG. 15 tandem repeats follow at residues 5–11, 12–18, 19–25, 26–32, 33–39, 40–46, 47–53, 54–60, 61–67, 68–74, 75–81, 82–88, 89–95, 96–102, and 103–109. Residues 5 to 109 form a 15 X 7 AA repeats of S-P-P-S-T-P-V region; that stretch reads SPPSTPVSPP…TPVSPPSSPA (105 aa). Over residues 184–203 the composition is skewed to basic residues; that stretch reads HCTRSTRSSRRMSRRHRHKG.

The sequence is that of Merozoite surface protein CMZ-8 from Eimeria acervulina (Coccidian parasite).